A 354-amino-acid polypeptide reads, in one-letter code: Clavesin-1 (354 aa).

Positions 118–279 (IKRALIDGFP…EFGGTLPPYD (162 aa)) constitute a CRAL-TRIO domain. Residues 317–354 (RECSPKPMKRSQSVVEAGTLKHEEKGENENTQPLLALD) are disordered. Residues 335–344 (TLKHEEKGEN) are compositionally biased toward basic and acidic residues. Positions 345–354 (ENTQPLLALD) are enriched in polar residues.

In terms of assembly, forms a complex with clathrin heavy chain and gamma-adaptin.

It is found in the golgi apparatus. It localises to the trans-Golgi network membrane. The protein localises to the early endosome membrane. The protein resides in the cytoplasmic vesicle. Its subcellular location is the clathrin-coated vesicle. Its function is as follows. Required for normal morphology of late endosomes and/or lysosomes in neurons. Binds phosphatidylinositol 3,5-bisphosphate (PtdIns(3,5)P2). The polypeptide is Clavesin-1 (Clvs1) (Mus musculus (Mouse)).